The sequence spans 388 residues: Succinate--CoA ligase [ADP-forming] subunit beta (388 aa).

One can recognise an ATP-grasp domain in the interval 9 to 244 (KQIFAEYQLP…PSQEDPREAL (236 aa)). Residues K46, 53–55 (GRG), E99, S102, and E107 each bind ATP. N199 and D213 together coordinate Mg(2+). Substrate contacts are provided by residues N264 and 321 to 323 (GIV).

Belongs to the succinate/malate CoA ligase beta subunit family. Heterotetramer of two alpha and two beta subunits. Mg(2+) is required as a cofactor.

It carries out the reaction succinate + ATP + CoA = succinyl-CoA + ADP + phosphate. The catalysed reaction is GTP + succinate + CoA = succinyl-CoA + GDP + phosphate. Its pathway is carbohydrate metabolism; tricarboxylic acid cycle; succinate from succinyl-CoA (ligase route): step 1/1. Its function is as follows. Succinyl-CoA synthetase functions in the citric acid cycle (TCA), coupling the hydrolysis of succinyl-CoA to the synthesis of either ATP or GTP and thus represents the only step of substrate-level phosphorylation in the TCA. The beta subunit provides nucleotide specificity of the enzyme and binds the substrate succinate, while the binding sites for coenzyme A and phosphate are found in the alpha subunit. This is Succinate--CoA ligase [ADP-forming] subunit beta from Pasteurella multocida (strain Pm70).